The primary structure comprises 192 residues: Large ribosomal subunit protein bL25 (192 aa).

Belongs to the bacterial ribosomal protein bL25 family. CTC subfamily. Part of the 50S ribosomal subunit; part of the 5S rRNA/L5/L18/L25 subcomplex. Contacts the 5S rRNA. Binds to the 5S rRNA independently of L5 and L18.

Functionally, this is one of the proteins that binds to the 5S RNA in the ribosome where it forms part of the central protuberance. This chain is Large ribosomal subunit protein bL25, found in Marinomonas sp. (strain MWYL1).